The following is a 370-amino-acid chain: Dual-specificity RNA methyltransferase RlmN (370 aa).

The active-site Proton acceptor is Glu93. The 239-residue stretch at 99-337 folds into the Radical SAM core domain; the sequence is AEGRGTLCVS…VTTVRKTRGD (239 aa). A disulfide bond links Cys106 and Cys343. [4Fe-4S] cluster is bound by residues Cys113, Cys117, and Cys120. S-adenosyl-L-methionine-binding positions include 167-168, Ser199, 221-223, and Asn300; these read GE and SLH. The active-site S-methylcysteine intermediate is Cys343.

The protein belongs to the radical SAM superfamily. RlmN family. The cofactor is [4Fe-4S] cluster.

It localises to the cytoplasm. The catalysed reaction is adenosine(2503) in 23S rRNA + 2 reduced [2Fe-2S]-[ferredoxin] + 2 S-adenosyl-L-methionine = 2-methyladenosine(2503) in 23S rRNA + 5'-deoxyadenosine + L-methionine + 2 oxidized [2Fe-2S]-[ferredoxin] + S-adenosyl-L-homocysteine. The enzyme catalyses adenosine(37) in tRNA + 2 reduced [2Fe-2S]-[ferredoxin] + 2 S-adenosyl-L-methionine = 2-methyladenosine(37) in tRNA + 5'-deoxyadenosine + L-methionine + 2 oxidized [2Fe-2S]-[ferredoxin] + S-adenosyl-L-homocysteine. Specifically methylates position 2 of adenine 2503 in 23S rRNA and position 2 of adenine 37 in tRNAs. m2A2503 modification seems to play a crucial role in the proofreading step occurring at the peptidyl transferase center and thus would serve to optimize ribosomal fidelity. The sequence is that of Dual-specificity RNA methyltransferase RlmN from Francisella tularensis subsp. tularensis (strain FSC 198).